We begin with the raw amino-acid sequence, 174 residues long: Glutamyl-tRNA(Gln) amidotransferase subunit F, mitochondrial (174 aa).

This sequence belongs to the GatF family. Subunit of the heterotrimeric GatFAB amidotransferase (AdT) complex, composed of A, B and F subunits.

The protein localises to the mitochondrion inner membrane. It carries out the reaction L-glutamyl-tRNA(Gln) + L-glutamine + ATP + H2O = L-glutaminyl-tRNA(Gln) + L-glutamate + ADP + phosphate + H(+). Its function is as follows. Allows the formation of correctly charged Gln-tRNA(Gln) through the transamidation of misacylated Glu-tRNA(Gln) in the mitochondria. The reaction takes place in the presence of glutamine and ATP through an activated gamma-phospho-Glu-tRNA(Gln). Required for proper protein synthesis within the mitochondrion. This is Glutamyl-tRNA(Gln) amidotransferase subunit F, mitochondrial from Kluyveromyces lactis (strain ATCC 8585 / CBS 2359 / DSM 70799 / NBRC 1267 / NRRL Y-1140 / WM37) (Yeast).